The following is a 906-amino-acid chain: Alanine--tRNA ligase (906 aa).

Zn(2+) contacts are provided by H600, H604, C703, and H707.

The protein belongs to the class-II aminoacyl-tRNA synthetase family. As to quaternary structure, homodimer. Requires Zn(2+) as cofactor.

The protein localises to the cytoplasm. It catalyses the reaction tRNA(Ala) + L-alanine + ATP = L-alanyl-tRNA(Ala) + AMP + diphosphate. Functionally, catalyzes the attachment of alanine to tRNA(Ala) in a two-step reaction: alanine is first activated by ATP to form Ala-AMP and then transferred to the acceptor end of tRNA(Ala). Incorrectly charged aminoacyl-tRNA(Ala) is also edited in situ by the editing domain. This is Alanine--tRNA ligase (alaS) from Archaeoglobus fulgidus (strain ATCC 49558 / DSM 4304 / JCM 9628 / NBRC 100126 / VC-16).